The following is an 886-amino-acid chain: Semaphorin-6B (886 aa).

Residues 1–26 (MWTPRVPPPRPALSFFLLLLLGVTYG) form the signal peptide. The Extracellular segment spans residues 27 to 605 (LFPEEPPPLS…VSVNLLVTSS (579 aa)). The Sema domain occupies 32–525 (PPPLSVAPRD…FPRCVVRVPV (494 aa)). N-linked (GlcNAc...) asparagine glycosylation occurs at asparagine 75. 2 disulfides stabilise this stretch: cysteine 117/cysteine 127 and cysteine 145/cysteine 154. 2 N-linked (GlcNAc...) asparagine glycosylation sites follow: asparagine 156 and asparagine 292. Intrachain disulfides connect cysteine 268–cysteine 379 and cysteine 293–cysteine 338. Asparagine 387, asparagine 442, and asparagine 463 each carry an N-linked (GlcNAc...) asparagine glycan. 4 disulfide bridges follow: cysteine 487-cysteine 519, cysteine 528-cysteine 546, cysteine 534-cysteine 580, and cysteine 538-cysteine 554. Residues 606-626 (VAAFVVGAVVSGFSVGWFVGL) form a helical membrane-spanning segment. The Cytoplasmic segment spans residues 627–886 (RERRELARRK…TGERTAPPVP (260 aa)). 3 disordered regions span residues 655 to 677 (RLGE…PGGP), 697 to 731 (HGGP…AHAL), and 761 to 886 (EQPQ…PPVP). Residues 662–674 (TGPGGRGGAGGGP) show a composition bias toward gly residues. Omega-N-methylarginine is present on arginine 667. Positions 707–718 (LLPTPEQTPLPQ) are enriched in low complexity.

This sequence belongs to the semaphorin family. Homodimer. Binds specifically the SH3 domain of the protooncogene C-SRC. In adulthood, it is expressed ubiquitously.

The protein localises to the cell membrane. Functionally, functions as a cell surface repellent for mossy fibers of developing neurons in the hippocampus where it plays a role in axon guidance. May function through the PLXNA4 receptor expressed by mossy cell axons. This is Semaphorin-6B (Sema6b) from Mus musculus (Mouse).